Here is a 464-residue protein sequence, read N- to C-terminus: MGKRLLDKLWERHVVTTNENGLDLLYIDLHLVHEVTSPQAFEGLRLTNRTVRRPDLTFATMDHNIPTKDVWNITDRIAKQQLDTLRANCKQFQVPLADIGDEEQGIVHVIGPELGLTQPGKTIVCGDSHTATHGAFGALAFGIGTSEVEHVLATQTLWQRKPKAMGIELKGKLQKGVYAKDIILHLLSKYGVAVGTGYVMEFYGETIQVMEMEERMTLCNMAIEGGAKAGIIAPDEKTFAYVKGRKYAPRDYETFEKKWFELYTDADAIYDLHISIDVTDLAPYVTWGTNPSMGVRIDEKLPEKHDVNDERAFSYMGLIPGQSTYDIPVQHVFIGSCTNSRLSDLEIAASVVKGRKVKEGVRALVVPGSKRVRDAAMQKGLHHIFEEAGFEWREPGCSMCLGMNPDQVPEGEHCASTSNRNFEGRQGKGARTHLVSPAMAAAAALYGHFVDIRKESYDGAISYS.

Residues cysteine 337, cysteine 397, and cysteine 400 each contribute to the [4Fe-4S] cluster site.

Belongs to the aconitase/IPM isomerase family. LeuC type 1 subfamily. As to quaternary structure, heterodimer of LeuC and LeuD. It depends on [4Fe-4S] cluster as a cofactor.

It carries out the reaction (2R,3S)-3-isopropylmalate = (2S)-2-isopropylmalate. The protein operates within amino-acid biosynthesis; L-leucine biosynthesis; L-leucine from 3-methyl-2-oxobutanoate: step 2/4. Catalyzes the isomerization between 2-isopropylmalate and 3-isopropylmalate, via the formation of 2-isopropylmaleate. In Bacillus cereus (strain 03BB102), this protein is 3-isopropylmalate dehydratase large subunit.